Here is a 523-residue protein sequence, read N- to C-terminus: 2-isopropylmalate synthase (523 aa).

The 263-residue stretch at 5–267 (VIIFDTTLRD…HTAINHQEIW (263 aa)) folds into the Pyruvate carboxyltransferase domain. Residues aspartate 14, histidine 202, histidine 204, and asparagine 238 each contribute to the Mn(2+) site. Residues 392-523 (RLDYFSVQSG…QHNENNKETV (132 aa)) are regulatory domain.

It belongs to the alpha-IPM synthase/homocitrate synthase family. LeuA type 1 subfamily. As to quaternary structure, homodimer. Mn(2+) serves as cofactor.

The protein resides in the cytoplasm. It carries out the reaction 3-methyl-2-oxobutanoate + acetyl-CoA + H2O = (2S)-2-isopropylmalate + CoA + H(+). Its pathway is amino-acid biosynthesis; L-leucine biosynthesis; L-leucine from 3-methyl-2-oxobutanoate: step 1/4. Catalyzes the condensation of the acetyl group of acetyl-CoA with 3-methyl-2-oxobutanoate (2-ketoisovalerate) to form 3-carboxy-3-hydroxy-4-methylpentanoate (2-isopropylmalate). The polypeptide is 2-isopropylmalate synthase (Escherichia coli (strain SMS-3-5 / SECEC)).